A 495-amino-acid polypeptide reads, in one-letter code: ATP synthase subunit beta, chloroplastic (495 aa).

Residue 172–179 participates in ATP binding; that stretch reads GGAGVGKT.

This sequence belongs to the ATPase alpha/beta chains family. In terms of assembly, F-type ATPases have 2 components, CF(1) - the catalytic core - and CF(0) - the membrane proton channel. CF(1) has five subunits: alpha(3), beta(3), gamma(1), delta(1), epsilon(1). CF(0) has four main subunits: a(1), b(1), b'(1) and c(9-12).

It localises to the plastid. It is found in the chloroplast thylakoid membrane. The catalysed reaction is ATP + H2O + 4 H(+)(in) = ADP + phosphate + 5 H(+)(out). Its function is as follows. Produces ATP from ADP in the presence of a proton gradient across the membrane. The catalytic sites are hosted primarily by the beta subunits. This chain is ATP synthase subunit beta, chloroplastic, found in Scilla messeniaca (Greek squill).